A 500-amino-acid polypeptide reads, in one-letter code: Melanopsin (500 aa).

Residues 1-65 lie on the Extracellular side of the membrane; it reads MSHHSSWRGH…TVDVPDHAHY (65 aa). An N-linked (GlcNAc...) asparagine glycan is attached at Asn18. A helical transmembrane segment spans residues 66-86; it reads IIGAVILIVGITGVIGNALVI. Residues 87–101 lie on the Cytoplasmic side of the membrane; sequence YVFCRSRTLRTAGNM. A helical membrane pass occupies residues 102 to 122; that stretch reads FVVNLAVADFFMSLTQSPVFF. At 123–138 the chain is on the extracellular side; the sequence is AASLHRRWIFGERICE. A disulfide bond links Cys137 and Cys215. The helical transmembrane segment at 139 to 159 threads the bilayer; the sequence is LYAFCGALFGICSMMTLTAIA. At 160–182 the chain is on the cytoplasmic side; sequence ADRCLAITQPLALVGNVSRRKAG. The helical transmembrane segment at 183–203 threads the bilayer; that stretch reads AVLAVVWLYSLGWSLPPFFGW. The Extracellular portion of the chain corresponds to 204 to 232; it reads SAYVPEGLQTSCSWDYMTFTPSVRAYTIL. Residues 233-253 traverse the membrane as a helical segment; it reads LFIFVFFIPLGIIVSCYVGIF. At 254–286 the chain is on the cytoplasmic side; that stretch reads QAIRAMGKEIRELDCGETQKVYERMQNEWKMAK. Residues 287-307 traverse the membrane as a helical segment; sequence IALLVILLFVISWSPYSVVAL. Over 308 to 322 the chain is Extracellular; that stretch reads TATAGYSHLLTPYMN. Residues 323 to 343 form a helical membrane-spanning segment; it reads SVPAVIAKASAIHNPIIYAIT. Position 330 is an N6-(retinylidene)lysine (Lys330). At 344 to 500 the chain is on the cytoplasmic side; the sequence is HPKYRAAIAR…DGKALLLGGN (157 aa). 3 disordered regions span residues 406-428, 448-470, and 481-500; these read GKKRLSSASDSDSCWTESEADGS, VILSPGSSNSTASGQKSEKAHKV, and ETDSADESLSDGKALLLGGN. Composition is skewed to polar residues over residues 411-428 and 448-462; these read SSASDSDSCWTESEADGS and VILSPGSSNSTASGQ.

It belongs to the G-protein coupled receptor 1 family. Opsin subfamily. In terms of tissue distribution, expressed in a subset of retinal horizontal cells as well as in retinal ganglion cells.

Its subcellular location is the cell membrane. Its function is as follows. Photoreceptor implicated in non-image-forming responses to light. In Rutilus rutilus (Roach), this protein is Melanopsin (opn4).